Here is a 441-residue protein sequence, read N- to C-terminus: Xylose isomerase (441 aa).

Residues histidine 99 and aspartate 102 contribute to the active site. Glutamate 230, glutamate 266, aspartate 294, aspartate 305, aspartate 307, and aspartate 337 together coordinate Mn(2+).

The protein belongs to the xylose isomerase family. As to quaternary structure, homotetramer. Mn(2+) serves as cofactor.

It localises to the cytoplasm. The catalysed reaction is alpha-D-xylose = alpha-D-xylulofuranose. The chain is Xylose isomerase (xylA) from Geobacillus stearothermophilus (Bacillus stearothermophilus).